The following is a 219-amino-acid chain: Protein-L-isoaspartate O-methyltransferase 1 (219 aa).

Ser67 is a catalytic residue.

The protein belongs to the methyltransferase superfamily. L-isoaspartyl/D-aspartyl protein methyltransferase family.

It is found in the cytoplasm. The enzyme catalyses [protein]-L-isoaspartate + S-adenosyl-L-methionine = [protein]-L-isoaspartate alpha-methyl ester + S-adenosyl-L-homocysteine. Catalyzes the methyl esterification of L-isoaspartyl residues in peptides and proteins that result from spontaneous decomposition of normal L-aspartyl and L-asparaginyl residues. It plays a role in the repair and/or degradation of damaged proteins. The polypeptide is Protein-L-isoaspartate O-methyltransferase 1 (Geotalea uraniireducens (strain Rf4) (Geobacter uraniireducens)).